The primary structure comprises 208 residues: LexA repressor (208 aa).

The H-T-H motif DNA-binding region spans 29-49 (IREIGDSLNINSTSTVHNNIL). Active-site for autocatalytic cleavage activity residues include Ser131 and Lys168.

The protein belongs to the peptidase S24 family. In terms of assembly, homodimer.

The enzyme catalyses Hydrolysis of Ala-|-Gly bond in repressor LexA.. Represses a number of genes involved in the response to DNA damage (SOS response), including recA and lexA. In the presence of single-stranded DNA, RecA interacts with LexA causing an autocatalytic cleavage which disrupts the DNA-binding part of LexA, leading to derepression of the SOS regulon and eventually DNA repair. The protein is LexA repressor of Finegoldia magna (strain ATCC 29328 / DSM 20472 / WAL 2508) (Peptostreptococcus magnus).